The chain runs to 88 residues: uncharacterized protein (88 aa).

This is an uncharacterized protein from Lymantria dispar multicapsid nuclear polyhedrosis virus (LdMNPV).